We begin with the raw amino-acid sequence, 74 residues long: Ubiquitin-like protein FUBI (74 aa).

The protein belongs to the ubiquitin family.

The sequence is that of Ubiquitin-like protein FUBI (FAU) from Pongo abelii (Sumatran orangutan).